The chain runs to 474 residues: Bifunctional protein HldE (474 aa).

Positions 1 to 318 are ribokinase; sequence MKLSMPRFDQ…RAIQREEGSE (318 aa). Residue 194 to 197 coordinates ATP; sequence NLSE. Asp263 is a catalytic residue. The interval 343-474 is cytidylyltransferase; that stretch reads FTNGCFDILH…AIVEKIRKSE (132 aa).

This sequence in the N-terminal section; belongs to the carbohydrate kinase PfkB family. The protein in the C-terminal section; belongs to the cytidylyltransferase family. Homodimer.

It carries out the reaction D-glycero-beta-D-manno-heptose 7-phosphate + ATP = D-glycero-beta-D-manno-heptose 1,7-bisphosphate + ADP + H(+). It catalyses the reaction D-glycero-beta-D-manno-heptose 1-phosphate + ATP + H(+) = ADP-D-glycero-beta-D-manno-heptose + diphosphate. The protein operates within nucleotide-sugar biosynthesis; ADP-L-glycero-beta-D-manno-heptose biosynthesis; ADP-L-glycero-beta-D-manno-heptose from D-glycero-beta-D-manno-heptose 7-phosphate: step 1/4. Its pathway is nucleotide-sugar biosynthesis; ADP-L-glycero-beta-D-manno-heptose biosynthesis; ADP-L-glycero-beta-D-manno-heptose from D-glycero-beta-D-manno-heptose 7-phosphate: step 3/4. Its function is as follows. Catalyzes the phosphorylation of D-glycero-D-manno-heptose 7-phosphate at the C-1 position to selectively form D-glycero-beta-D-manno-heptose-1,7-bisphosphate. Functionally, catalyzes the ADP transfer from ATP to D-glycero-beta-D-manno-heptose 1-phosphate, yielding ADP-D-glycero-beta-D-manno-heptose. In Pseudomonas fluorescens (strain Pf0-1), this protein is Bifunctional protein HldE.